A 213-amino-acid polypeptide reads, in one-letter code: T-cell surface glycoprotein CD8 beta chain (213 aa).

Residues 1–21 (MQPWLWLVFSMKLAALWSSSA) form the signal peptide. Residues 22-133 (LIQTPSSLLV…KMVFGTGTKL (112 aa)) form the Ig-like V-type domain. Over 22–175 (LIQTPSSLLV…QKGLTCSLTT (154 aa)) the chain is Extracellular. The N-linked (GlcNAc...) asparagine glycan is linked to asparagine 34. A disulfide bridge connects residues cysteine 41 and cysteine 117. The chain crosses the membrane as a helical span at residues 176-196 (LSLLVVCILLLLAFLGVAVYF). Residues 197–213 (YCVRRRARIHFMKQFHK) are Cytoplasmic-facing.

As to quaternary structure, forms disulfide-linked heterodimers with CD8A at the cell surface. Interacts with CD3D; this interaction couples TCR-CD3 with CD8. Interacts with LCK. Post-translationally, palmitoylated at the cytoplasmic tail and thereby targets the heterodimer CD8A/CD8B to lipid rafts unlike CD8A homodimers.

Its subcellular location is the membrane. Integral membrane glycoprotein that plays an essential role in the immune response and serves multiple functions in responses against both external and internal offenses. In T-cells, functions primarily as a coreceptor for MHC class I molecule:peptide complex. The antigens presented by class I peptides are derived from cytosolic proteins while class II derived from extracellular proteins. Interacts simultaneously with the T-cell receptor (TCR) and the MHC class I proteins presented by antigen presenting cells (APCs). In turn, recruits the Src kinase LCK to the vicinity of the TCR-CD3 complex. A palmitoylation site in the cytoplasmic tail of CD8B chain contributes to partitioning of CD8 into the plasma membrane lipid rafts where signaling proteins are enriched. Once LCK recruited, it initiates different intracellular signaling pathways by phosphorylating various substrates ultimately leading to lymphokine production, motility, adhesion and activation of cytotoxic T-lymphocytes (CTLs). Additionally, plays a critical role in thymic selection of CD8+ T-cells. This Mus musculus (Mouse) protein is T-cell surface glycoprotein CD8 beta chain (Cd8b).